The primary structure comprises 319 residues: tRNA-cytidine(32) 2-sulfurtransferase (319 aa).

A PP-loop motif motif is present at residues 43–48 (SGGKDS). Residues Cys-118, Cys-121, and Cys-209 each contribute to the [4Fe-4S] cluster site.

Belongs to the TtcA family. As to quaternary structure, homodimer. It depends on Mg(2+) as a cofactor. [4Fe-4S] cluster is required as a cofactor.

Its subcellular location is the cytoplasm. The catalysed reaction is cytidine(32) in tRNA + S-sulfanyl-L-cysteinyl-[cysteine desulfurase] + AH2 + ATP = 2-thiocytidine(32) in tRNA + L-cysteinyl-[cysteine desulfurase] + A + AMP + diphosphate + H(+). It functions in the pathway tRNA modification. Functionally, catalyzes the ATP-dependent 2-thiolation of cytidine in position 32 of tRNA, to form 2-thiocytidine (s(2)C32). The sulfur atoms are provided by the cysteine/cysteine desulfurase (IscS) system. This chain is tRNA-cytidine(32) 2-sulfurtransferase, found in Neisseria meningitidis serogroup C / serotype 2a (strain ATCC 700532 / DSM 15464 / FAM18).